The primary structure comprises 143 residues: Peptide methionine sulfoxide reductase MsrB (143 aa).

Residues 16–139 (DAELRRRLTP…NSAALNFEAK (124 aa)) enclose the MsrB domain. The Zn(2+) site is built by cysteine 55, cysteine 58, cysteine 104, and cysteine 107. Cysteine 128 functions as the Nucleophile in the catalytic mechanism.

The protein belongs to the MsrB Met sulfoxide reductase family. Zn(2+) is required as a cofactor.

It catalyses the reaction L-methionyl-[protein] + [thioredoxin]-disulfide + H2O = L-methionyl-(R)-S-oxide-[protein] + [thioredoxin]-dithiol. This is Peptide methionine sulfoxide reductase MsrB from Burkholderia mallei (strain NCTC 10229).